The chain runs to 334 residues: Cathepsin J (334 aa).

Positions 1–17 (MTPAVFLVILCFGVASG) are cleaved as a signal peptide. A propeptide spans 18-113 (APARDPNLDA…PSAQKQVSIG (96 aa)) (activation peptide). Residue Cys-138 is part of the active site. Residues Asn-217, Asn-221, and Asn-268 are each glycosylated (N-linked (GlcNAc...) asparagine). Cys-269 and Cys-322 form a disulfide bridge. The active site involves His-276. N-linked (GlcNAc...) asparagine glycosylation is present at Asn-288. Asn-300 is an active-site residue.

This sequence belongs to the peptidase C1 family. Expressed specifically in placenta.

The protein localises to the lysosome. This chain is Cathepsin J (Ctsj), found in Rattus norvegicus (Rat).